The sequence spans 219 residues: Ribose-5-phosphate isomerase A (219 aa).

Substrate is bound by residues 28-31, 81-84, and 94-97; these read SGST, DGAD, and KGGG. Glu-103 functions as the Proton acceptor in the catalytic mechanism. Lys-121 contacts substrate.

The protein belongs to the ribose 5-phosphate isomerase family. In terms of assembly, homodimer.

The catalysed reaction is aldehydo-D-ribose 5-phosphate = D-ribulose 5-phosphate. It participates in carbohydrate degradation; pentose phosphate pathway; D-ribose 5-phosphate from D-ribulose 5-phosphate (non-oxidative stage): step 1/1. In terms of biological role, catalyzes the reversible conversion of ribose-5-phosphate to ribulose 5-phosphate. The protein is Ribose-5-phosphate isomerase A of Haemophilus influenzae (strain 86-028NP).